Consider the following 1320-residue polypeptide: MSSNDSSLMAGIIYYSQEKYFHHVQQAAAVGLEKFSNDPVLKFFKAYGVLKEEHIQDAISDLESIRHHPDVSLCSTMALIYAHKRCEIIDREAIQELEYSLKEIRKTVSGTALYYAGLFLWLIGRHDKAKEYIDRMLKISRGFREAYVLRGWVDLTSDKPHTAKKAIEYLEQGIQDTKDVLGLMGKAMYFMMQQNYSEALEVVNQITVTSGSFLPALVLKMQLFLARQDWEQTVEMGHRILEKDESNIDACQILTVHELAREGNMTTVSSLKTQKATNHVRNLIKALETREPENPSLHLKKIIVVSRLCGSHQVILGLVCSFIERTFMATPSYVHVATELGYLFILKNQVKEALLWYSEAMKLDKDGMAGLTGIILCHILEGHLEEAEYRLEFLKEVQKSLGKSEVLIFLQALLMSRKHKGEEETTALLKEAVELHFSSMQGIPLGSEYFEKLDPYFLVCIAKEYLLFCPKQPRLPGQIVSPLLKQVAVILNPVVKAAPALIDPLYLMAQVRYYSELENAQSILQRCLELDPASVDAHLLMCQIYLAQGNFGMCFHCLELGVSHNFQVRDHPLYHLIKARALNKAGDYPEAIKTLKMVIKLPALKKEEGRKFLRPSVQPSQRASILLELVEALRLNGELHEATKVMQDTINEFGGTPEENRITIANVDLVLSKGNVDVALNMLRNILPKQSCYMEAREKMANIYLQTLRDRRLYIRCYRELCEHLPGPHTSLLLGDALMSILEPEKALEVYDEAYRQNPHDASLASRIGHAYVKAHQYTEAIEYYEAAQKINGQDFLCCDLGKLLLKLKKVNKAEKVLKQALEHDIVQDIPSMMNDVKCLLLLAKVYKSHKKEAVIETLNKALDLQSRILKRVPLEQPEMIPSQKQLAASICIQFAEHYLAEKEYDKAVQSYKDVFSYLPTDNKVMLELAQLYLLQGHLDLCEQHCAILLQTEQNHETASVLMADLMFRKQKHEAAINLYHQVLEKAPDNFLVLHKLIDLLRRSGKLEDIPAFFELAKKVSSRVPLEPGFNYCRGIYCWHIGQPNEALKFLNKARKDSTWGQSAIYHMVQICLNPDNEVVGGEAFENQGAESNYMEKKELEQQGVSTAEKLLREFYPHSDSSQTQLRLLQGLCRLATREKANMEAALGSFIQIAQAEKDSVPALLALAQAYVFLKQIPKARMQLKRLAKTPWVLSEAEDLEKSWLLLADIYCQGSKFDLALELLRRCVQYNKSCYKAYEYMGFIMEKEQSYKDAVTNYKLAWKYSHHANPAIGFKLAFNYLKDKKFVEAIEICNDVLREHPDYPKIREEILEKARRSLRP.

TPR repeat units lie at residues 4–38 (NDSS…FSND), 110–143 (GTAL…SRGF), 146–180 (AYVL…TKDV), 181–213 (LGLM…SGSF), 215–247 (PALV…DESN), 334–367 (VHVA…DKDG), 502–534 (IDPL…DPAS), 572–605 (PLYH…PALK), 728–761 (PHTS…NPHD), 762–795 (ASLA…NGQD), 797–828 (LCCD…DIVQ), 837–869 (VKCL…QSRI), 889–922 (ASIC…LPTD), 924–956 (KVML…EQNH), 957–990 (ETAS…APDN), 1028–1061 (PGFN…STWG), 1201–1234 (EKSW…NKSC), 1236–1268 (KAYE…SHHA), and 1270–1303 (PAIG…HPDY).

It belongs to the TTC21 family. As to quaternary structure, interacts with IFT20. Interacts with IFT52. Interacts with IFT140. Interacts with CEP78; regulating IFT20 stability and localization. In terms of tissue distribution, strongly expressed in testis.

Functionally, intraflagellar transport (IFT)-associated protein required for spermatogenesis. Required for sperm flagellar formation and intraflagellar transport. This chain is Tetratricopeptide repeat protein 21A, found in Homo sapiens (Human).